The following is a 377-amino-acid chain: Cobalt-precorrin-5B C(1)-methyltransferase (377 aa).

The interval 1 to 21 (MNPVRQPYDLAAPAPNGMRRG) is disordered.

Belongs to the CbiD family.

The catalysed reaction is Co-precorrin-5B + S-adenosyl-L-methionine = Co-precorrin-6A + S-adenosyl-L-homocysteine. Its pathway is cofactor biosynthesis; adenosylcobalamin biosynthesis; cob(II)yrinate a,c-diamide from sirohydrochlorin (anaerobic route): step 6/10. Its function is as follows. Catalyzes the methylation of C-1 in cobalt-precorrin-5B to form cobalt-precorrin-6A. This is Cobalt-precorrin-5B C(1)-methyltransferase from Chromobacterium violaceum (strain ATCC 12472 / DSM 30191 / JCM 1249 / CCUG 213 / NBRC 12614 / NCIMB 9131 / NCTC 9757 / MK).